The chain runs to 1730 residues: Nebulin-related-anchoring protein (1730 aa).

The LIM zinc-binding domain maps to 4–64; it reads QPCSRCGYGV…HAHNPKNNTF (61 aa). 44 Nebulin repeats span residues 63 to 97, 156 to 166, 175 to 202, 203 to 237, 246 to 273, 298 to 307, 316 to 343, 348 to 382, 389 to 417, 419 to 453, 487 to 521, 522 to 556, 558 to 592, 602 to 626, 627 to 661, 662 to 692, 702 to 724, 726 to 760, 761 to 795, 797 to 831, 844 to 869, 870 to 896, 901 to 935, 945 to 963, 969 to 1003, 1004 to 1038, 1040 to 1074, 1078 to 1112, 1113 to 1139, 1144 to 1178, 1183 to 1206, 1212 to 1246, 1247 to 1281, 1283 to 1317, 1321 to 1355, 1356 to 1390, 1391 to 1421, 1429 to 1449, 1455 to 1481, 1490 to 1524, 1526 to 1560, 1564 to 1598, 1599 to 1626, and 1640 to 1664; these read TFTS…QCKS, EYTEDYEQPRG, TPAY…ERIS, RFST…QQRG, TPAY…KEMR, YPEEYEEHRG, TPAY…KMKG, HSLP…SSRG, ETPQ…NHMR, RYEG…HDIV, KYSS…KNKL, NYTL…KTKG, GFEM…KTKG, LLHS…ESKT, RFHL…EYTV, LPED…WMKG, NLEQ…RVDE, KFTS…QSVH, QYTI…NQKA, GFEL…RSRG, QMSH…DTKS, QCHV…VGYK, HFTA…WMKG, NVEQ…KYRQ, KFTS…NIKH, HYTP…KLRD, GYKL…KMKG, GSRS…HSKA, QFHL…QDYK, QYTS…FMRG, IPGT…KYRQ, KYTA…DARH, EYTM…NLRA, GYKL…KERG, GPQS…SSQA, QFHL…KFTA, LPED…GMKG, SPQM…KYRK, KFTT…RMYR, RYTL…QTRA, SYDF…RDRG, GYRS…KSRS, QFHS…HYRQ, and LRHA…LTRG. Ser1081 is modified (phosphoserine). A disordered region spans residues 1595-1620; that stretch reads KSRSQFHSSTDQPGLLQAKRSQQLAS. Over residues 1596 to 1606 the composition is skewed to polar residues; that stretch reads SRSQFHSSTDQ.

Interacts with actin, alpha-actinin, KLHL41, TLN1 and VCL. Interacts with CSRP3. As to expression, expressed in cardiac and skeletal muscle.

Functionally, may be involved in anchoring the terminal actin filaments in the myofibril to the membrane and in transmitting tension from the myofibrils to the extracellular matrix. This Homo sapiens (Human) protein is Nebulin-related-anchoring protein.